A 233-amino-acid chain; its full sequence is Small ribosomal subunit protein uS2 (233 aa).

It belongs to the universal ribosomal protein uS2 family.

The polypeptide is Small ribosomal subunit protein uS2 (Clostridium perfringens (strain ATCC 13124 / DSM 756 / JCM 1290 / NCIMB 6125 / NCTC 8237 / Type A)).